The primary structure comprises 404 residues: MEELKLNTIEEAIADFREGKFVIVVDDEDRENEGDLIVAAEKITPEQVNFMLKHARGVLCAPITISRCKELELPHQVDTNTSVLGTPFTVTVDKLEGCSTGVSIHDRAATIRALADPTSTPETFGRPGHVNPLYAQDKGVLRRAGHTEACIDMARLAGLYPAAALMEIMSEDGTMARLPELRKMADEWGLKLISIRDLIAYRLKQESLVEKGVEVDMPTEYGHFRLIPFRQKSNGLEHIAIIKGDIKEGEPVLVRVHSSCATGDIFGSMRCDCGEQLHKALQMIEKEGKGAVVYLNQEGRGIGLMEKMKAYKLQENGVDTVEANILLGHQADERDYGVGAQILRSIGVTQMRLLTNNPVKRVGLESYGLSIVENVPIEITPNKYNERYLKTKKDRMGHTLHFNK.

A DHBP synthase region spans residues 1–204; it reads MEELKLNTIE…IRDLIAYRLK (204 aa). D-ribulose 5-phosphate-binding positions include 30–31, aspartate 35, 143–147, and glutamate 167; these read RE and RAGHT. Glutamate 31 provides a ligand contact to Mg(2+). Histidine 146 is a Mg(2+) binding site. Positions 205 to 404 are GTP cyclohydrolase II; that stretch reads QESLVEKGVE…RMGHTLHFNK (200 aa). 255-259 contacts GTP; sequence RVHSS. The Zn(2+) site is built by cysteine 260, cysteine 271, and cysteine 273. Residues glutamine 276, 298-300, and threonine 320 each bind GTP; that span reads EGR. Aspartate 332 (proton acceptor; for GTP cyclohydrolase activity) is an active-site residue. The active-site Nucleophile; for GTP cyclohydrolase activity is arginine 334. GTP is bound by residues threonine 355 and lysine 360.

The protein in the N-terminal section; belongs to the DHBP synthase family. It in the C-terminal section; belongs to the GTP cyclohydrolase II family. Mg(2+) serves as cofactor. Mn(2+) is required as a cofactor. It depends on Zn(2+) as a cofactor.

The enzyme catalyses D-ribulose 5-phosphate = (2S)-2-hydroxy-3-oxobutyl phosphate + formate + H(+). It carries out the reaction GTP + 4 H2O = 2,5-diamino-6-hydroxy-4-(5-phosphoribosylamino)-pyrimidine + formate + 2 phosphate + 3 H(+). It functions in the pathway cofactor biosynthesis; riboflavin biosynthesis; 2-hydroxy-3-oxobutyl phosphate from D-ribulose 5-phosphate: step 1/1. Its pathway is cofactor biosynthesis; riboflavin biosynthesis; 5-amino-6-(D-ribitylamino)uracil from GTP: step 1/4. Its function is as follows. Catalyzes the conversion of D-ribulose 5-phosphate to formate and 3,4-dihydroxy-2-butanone 4-phosphate. Catalyzes the conversion of GTP to 2,5-diamino-6-ribosylamino-4(3H)-pyrimidinone 5'-phosphate (DARP), formate and pyrophosphate. This is Riboflavin biosynthesis protein RibBA from Phocaeicola vulgatus (strain ATCC 8482 / DSM 1447 / JCM 5826 / CCUG 4940 / NBRC 14291 / NCTC 11154) (Bacteroides vulgatus).